The following is a 156-amino-acid chain: Cyclic pyranopterin monophosphate synthase (156 aa).

Residues 73-75 (LCH) and 110-111 (ME) contribute to the substrate site. D125 is a catalytic residue.

The protein belongs to the MoaC family. As to quaternary structure, homohexamer; trimer of dimers.

The enzyme catalyses (8S)-3',8-cyclo-7,8-dihydroguanosine 5'-triphosphate = cyclic pyranopterin phosphate + diphosphate. Its pathway is cofactor biosynthesis; molybdopterin biosynthesis. Its function is as follows. Catalyzes the conversion of (8S)-3',8-cyclo-7,8-dihydroguanosine 5'-triphosphate to cyclic pyranopterin monophosphate (cPMP). This is Cyclic pyranopterin monophosphate synthase from Pseudomonas putida (strain GB-1).